The sequence spans 332 residues: Glycerol-3-phosphate dehydrogenase [NAD(P)+] (332 aa).

Residues tryptophan 11, arginine 30, and lysine 108 each contribute to the NADPH site. Lysine 108, glycine 137, and serine 139 together coordinate sn-glycerol 3-phosphate. Alanine 141 serves as a coordination point for NADPH. The sn-glycerol 3-phosphate site is built by lysine 192, aspartate 245, serine 255, arginine 256, and asparagine 257. The active-site Proton acceptor is the lysine 192. Arginine 256 contacts NADPH. The NADPH site is built by valine 280 and glutamate 282.

This sequence belongs to the NAD-dependent glycerol-3-phosphate dehydrogenase family.

The protein resides in the cytoplasm. The enzyme catalyses sn-glycerol 3-phosphate + NAD(+) = dihydroxyacetone phosphate + NADH + H(+). The catalysed reaction is sn-glycerol 3-phosphate + NADP(+) = dihydroxyacetone phosphate + NADPH + H(+). It participates in membrane lipid metabolism; glycerophospholipid metabolism. Catalyzes the reduction of the glycolytic intermediate dihydroxyacetone phosphate (DHAP) to sn-glycerol 3-phosphate (G3P), the key precursor for phospholipid synthesis. The chain is Glycerol-3-phosphate dehydrogenase [NAD(P)+] from Burkholderia orbicola (strain MC0-3).